A 341-amino-acid polypeptide reads, in one-letter code: GTPase Obg (341 aa).

The Obg domain maps to 1–159; the sequence is MKFVDEALIK…RNLRLELRVL (159 aa). The disordered stretch occupies residues 128–150; sequence TRYKSSVNRSPRQTTPGSPGESR. A compositionally biased stretch (polar residues) spans 129-144; that stretch reads RYKSSVNRSPRQTTPG. One can recognise an OBG-type G domain in the interval 160–334; it reads ADVGLLGLPN…LCYALMQLID (175 aa). Residues 166–173, 191–195, 213–216, 283–286, and 315–317 each bind GTP; these read GLPNAGKS, FTTLH, DIPG, NKID, and SAI. Ser-173 and Thr-193 together coordinate Mg(2+).

It belongs to the TRAFAC class OBG-HflX-like GTPase superfamily. OBG GTPase family. Monomer. Requires Mg(2+) as cofactor.

The protein localises to the cytoplasm. Functionally, an essential GTPase which binds GTP, GDP and possibly (p)ppGpp with moderate affinity, with high nucleotide exchange rates and a fairly low GTP hydrolysis rate. Plays a role in control of the cell cycle, stress response, ribosome biogenesis and in those bacteria that undergo differentiation, in morphogenesis control. The protein is GTPase Obg of Legionella pneumophila subsp. pneumophila (strain Philadelphia 1 / ATCC 33152 / DSM 7513).